The sequence spans 949 residues: Pyruvate, phosphate dikinase, chloroplastic (949 aa).

The transit peptide at 1-74 directs the protein to the chloroplast; it reads MASAFKGILI…VMAPASDPTS (74 aa). The residue at position 530 (T530) is a Phosphothreonine; by PDRP1. H532 serves as the catalytic Tele-phosphohistidine intermediate. Residues R638, R695, E824, G845, T846, N847, and D848 each coordinate substrate. Position 824 (E824) interacts with Mg(2+). Residue D848 participates in Mg(2+) binding. Residue C910 is the Proton donor of the active site.

Belongs to the PEP-utilizing enzyme family. Homodimer. The cofactor is Mg(2+). In terms of processing, phosphorylation of Thr-530 in the dark inactivates the enzyme. Dephosphorylation upon light stimulation reactivates the enzyme.

The protein resides in the plastid. It is found in the chloroplast. It carries out the reaction pyruvate + phosphate + ATP = phosphoenolpyruvate + AMP + diphosphate + H(+). With respect to regulation, activated by light-induced dephosphorylation. Inhibited by dark-induced phosphorylation. Both reactions are catalyzed by PDRP1. Its function is as follows. Formation of phosphoenolpyruvate, which is the primary acceptor of CO(2) in C4 and some Crassulacean acid metabolism plants. This Mesembryanthemum crystallinum (Common ice plant) protein is Pyruvate, phosphate dikinase, chloroplastic (PPD).